Consider the following 387-residue polypeptide: 4-hydroxy-3-methylbut-2-en-1-yl diphosphate synthase (flavodoxin) (387 aa).

[4Fe-4S] cluster is bound by residues cysteine 293, cysteine 296, cysteine 328, and glutamate 335.

Belongs to the IspG family. Requires [4Fe-4S] cluster as cofactor.

The catalysed reaction is (2E)-4-hydroxy-3-methylbut-2-enyl diphosphate + oxidized [flavodoxin] + H2O + 2 H(+) = 2-C-methyl-D-erythritol 2,4-cyclic diphosphate + reduced [flavodoxin]. It functions in the pathway isoprenoid biosynthesis; isopentenyl diphosphate biosynthesis via DXP pathway; isopentenyl diphosphate from 1-deoxy-D-xylulose 5-phosphate: step 5/6. Its function is as follows. Converts 2C-methyl-D-erythritol 2,4-cyclodiphosphate (ME-2,4cPP) into 1-hydroxy-2-methyl-2-(E)-butenyl 4-diphosphate. In Treponema denticola (strain ATCC 35405 / DSM 14222 / CIP 103919 / JCM 8153 / KCTC 15104), this protein is 4-hydroxy-3-methylbut-2-en-1-yl diphosphate synthase (flavodoxin).